Here is a 228-residue protein sequence, read N- to C-terminus: uncharacterized protein (228 aa).

A signal peptide spans 1-19; sequence MYRYTWLLWWITILLRIQQ. N41, N93, N100, N128, and N164 each carry an N-linked (GlcNAc...) asparagine; by host glycan. A helical membrane pass occupies residues 189–209; that stretch reads MWIIPLVIVTTIIVLICFKFP.

This sequence belongs to the HHV-5 UL9 family.

The protein localises to the host membrane. This is an uncharacterized protein from Homo sapiens (Human).